Reading from the N-terminus, the 300-residue chain is Mycothiol acetyltransferase (300 aa).

N-acetyltransferase domains follow at residues 4-140 (IDWR…RPLT) and 151-300 (VRLA…AVAD). Asp36 is a binding site for 1D-myo-inositol 2-(L-cysteinylamino)-2-deoxy-alpha-D-glucopyranoside. Acetyl-CoA is bound at residue 79–81 (LVV). 1D-myo-inositol 2-(L-cysteinylamino)-2-deoxy-alpha-D-glucopyranoside contacts are provided by Glu178, Lys219, and Glu227. 231-233 (VGV) serves as a coordination point for acetyl-CoA. Tyr269 is a 1D-myo-inositol 2-(L-cysteinylamino)-2-deoxy-alpha-D-glucopyranoside binding site. Residue 274-279 (NGAAVK) coordinates acetyl-CoA.

It belongs to the acetyltransferase family. MshD subfamily. Monomer.

The catalysed reaction is 1D-myo-inositol 2-(L-cysteinylamino)-2-deoxy-alpha-D-glucopyranoside + acetyl-CoA = mycothiol + CoA + H(+). In terms of biological role, catalyzes the transfer of acetyl from acetyl-CoA to desacetylmycothiol (Cys-GlcN-Ins) to form mycothiol. This is Mycothiol acetyltransferase from Mycobacterium sp. (strain JLS).